A 407-amino-acid polypeptide reads, in one-letter code: Arginine deiminase (407 aa).

C397 serves as the catalytic Amidino-cysteine intermediate.

The protein belongs to the arginine deiminase family.

The protein localises to the cytoplasm. The catalysed reaction is L-arginine + H2O = L-citrulline + NH4(+). Its pathway is amino-acid degradation; L-arginine degradation via ADI pathway; carbamoyl phosphate from L-arginine: step 1/2. The protein is Arginine deiminase of Salmonella choleraesuis (strain SC-B67).